We begin with the raw amino-acid sequence, 101 residues long: MAKQALLQRELKRDKLVAKFAKKHAEFKAIANDFKRTDDERALARLELQKLPRNANPTRQRNRCAITGRPRGTFRQFGLARAKIRELAFAGDIPGITKASW.

This sequence belongs to the universal ribosomal protein uS14 family. In terms of assembly, part of the 30S ribosomal subunit. Contacts proteins S3 and S10.

In terms of biological role, binds 16S rRNA, required for the assembly of 30S particles and may also be responsible for determining the conformation of the 16S rRNA at the A site. The polypeptide is Small ribosomal subunit protein uS14 (Polaromonas naphthalenivorans (strain CJ2)).